A 439-amino-acid chain; its full sequence is Vacuolar zinc transporter COT1 (439 aa).

The Cytoplasmic portion of the chain corresponds to 1–9; sequence MKLGSKQVK. A helical membrane pass occupies residues 10 to 30; that stretch reads IISLLLLDTVFFGIEITTGYL. Residues 31-33 lie on the Vacuolar side of the membrane; it reads SHS. Residues 34–54 form a helical membrane-spanning segment; that stretch reads LALIADSFHMLNDIISLVVAL. The Cytoplasmic portion of the chain corresponds to 55–76; that stretch reads WAVNVAKNRNPDSTYTYGWKRA. A helical membrane pass occupies residues 77-97; the sequence is EILGALINAVFLIALCVSILI. Residues 98-113 lie on the Vacuolar side of the membrane; sequence EALQRIIAPPVIENPK. The helical transmembrane segment at 114-134 threads the bilayer; the sequence is FVLYVGVAGLISNTVGLFLFH. Over 135 to 244 the chain is Cytoplasmic; the sequence is DNDQEHGHGH…RKRSLNMHGV (110 aa). 3 consecutive short sequence motifs (histidine repeat) follow at residues 140–144, 165–169, and 219–223; these read HGHGH, HTHAH, and SSHTI. A compositionally biased stretch (polar residues) spans 207 to 230; that stretch reads PENASKTPSYSTSSHTIASGGNYT. Residues 207-231 are disordered; that stretch reads PENASKTPSYSTSSHTIASGGNYTE. Serine 225 carries the phosphoserine modification. A helical transmembrane segment spans residues 245–265; that stretch reads FLHVLGDALGNIGVMLSAFFI. The Vacuolar portion of the chain corresponds to 266-274; sequence WKTDYSWKY. A helical transmembrane segment spans residues 275 to 295; sequence YTDPLVSLIITGIIFSSALPL. Residues 296–439 are Cytoplasmic-facing; sequence SCKASKILLQ…CNTADCLEDH (144 aa). Lysine 301 participates in a covalent cross-link: Glycyl lysine isopeptide (Lys-Gly) (interchain with G-Cter in ubiquitin). A compositionally biased stretch (basic and acidic residues) spans 388–402; that stretch reads TSTERAGDSQGDHLQ. The interval 388–408 is disordered; the sequence is TSTERAGDSQGDHLQNDPLSL.

It belongs to the cation diffusion facilitator (CDF) transporter (TC 2.A.4) family. SLC30A subfamily.

It localises to the vacuole membrane. It carries out the reaction Zn(2+)(in) = Zn(2+)(out). Functionally, vacuolar transporter that regulates zinc homeostasis by mediating zinc transport and storage into the vacuole. Plays a role in resistance to zinc shock resulting from sudden influx of zinc into cytoplasm. May also participate in the regulation of cobalt levels under normal physiological conditions and may be important in the supply of metal that is required for metalloenzyme or cofactor synthesis. Involved in the resistance to cobalt and rhodium ions. The chain is Vacuolar zinc transporter COT1 from Saccharomyces cerevisiae (strain ATCC 204508 / S288c) (Baker's yeast).